A 340-amino-acid polypeptide reads, in one-letter code: Protein-tyrosine-phosphatase PTP1 (340 aa).

One can recognise a Tyrosine-protein phosphatase domain in the interval isoleucine 58–glutamate 326. Substrate is bound by residues aspartate 234, cysteine 265–arginine 271, and glutamine 311. Residue cysteine 265 is the Phosphocysteine intermediate of the active site.

In terms of assembly, interacts with MPK6. Interacts with KIN10. Phosphorylated by KIN10. As to expression, expressed in roots, stems and flowers, and at low levels in leaves.

Its subcellular location is the cytoplasm. The protein localises to the cytosol. It localises to the nucleus. The catalysed reaction is O-phospho-L-tyrosyl-[protein] + H2O = L-tyrosyl-[protein] + phosphate. Inhibited by hydrogen peroxide. Functionally, protein-tyrosine-phosphatase that dephosphorylates and probably inhibits MPK6 in non-oxidative stress conditions. In association with MKP1, represses salicylic acid (SA) and camalexin biosynthesis, thus modulating defense response. May also repress MPK3. Dephosphorylates and inactivates MPK4 in vitro. This Arabidopsis thaliana (Mouse-ear cress) protein is Protein-tyrosine-phosphatase PTP1 (PTP1).